The sequence spans 167 residues: Stress-related protein (167 aa).

The protein belongs to the REF/SRPP family.

In terms of biological role, plays a role in plant defense. In Phaseolus vulgaris (Kidney bean), this protein is Stress-related protein (SRP).